A 190-amino-acid chain; its full sequence is Segregation and condensation protein B (190 aa).

It belongs to the ScpB family. As to quaternary structure, homodimer. Homodimerization may be required to stabilize the binding of ScpA to the Smc head domains. Component of a cohesin-like complex composed of ScpA, ScpB and the Smc homodimer, in which ScpA and ScpB bind to the head domain of Smc. The presence of the three proteins is required for the association of the complex with DNA.

Its subcellular location is the cytoplasm. In terms of biological role, participates in chromosomal partition during cell division. May act via the formation of a condensin-like complex containing Smc and ScpA that pull DNA away from mid-cell into both cell halves. The sequence is that of Segregation and condensation protein B from Bacillus thuringiensis subsp. konkukian (strain 97-27).